Reading from the N-terminus, the 270-residue chain is Photosystem I chlorophyll a/b-binding protein 6, chloroplastic (270 aa).

Residues M1–T33 constitute a chloroplast transit peptide. The segment at S16–T36 is disordered. The span at R19–T36 shows a compositional bias: polar residues. W68 is a chlorophyll b binding site. Chlorophyll a is bound by residues F88 and E107. R112 contributes to the chlorophyll b binding site. Residues Y146 to A164 traverse the membrane as a helical segment. Chlorophyll b is bound by residues E165 and R168. K221, E222, N225, R227, Q239, and H254 together coordinate chlorophyll a. Residues L228–S244 traverse the membrane as a helical segment.

The protein belongs to the light-harvesting chlorophyll a/b-binding (LHC) protein family. In terms of assembly, the LHC complex consists of chlorophyll a-b binding proteins. Homodimer. Binds pigments. Element of the NAD(P)H dehydrogenase-photosystem I supercomplex (NDH-PSI). Binds at least 14 chlorophylls (8 Chl-a and 6 Chl-b) and carotenoids such as lutein and neoxanthin. serves as cofactor. Post-translationally, photoregulated by reversible phosphorylation of its threonine residues.

It is found in the plastid. The protein resides in the chloroplast thylakoid membrane. The light-harvesting complex (LHC) functions as a light receptor, it captures and delivers excitation energy to photosystems with which it is closely associated. Seems involved in the function of the photosystem I in low light conditions, when other LHCA proteins are less abundant. Required, together with LHCA5, for the formation of a full-size NAD(P)H dehydrogenase-photosystem I supercomplex (NDH-PSI) that triggers cyclic and chlororespiratory electron transport in chloroplast thylakoids, especially under stress conditions (e.g. increased light intensity). The chain is Photosystem I chlorophyll a/b-binding protein 6, chloroplastic from Arabidopsis thaliana (Mouse-ear cress).